Reading from the N-terminus, the 589-residue chain is Putative ABC transporter ATP-binding protein MG015 (589 aa).

A run of 6 helical transmembrane segments spans residues 9-29 (LLYV…NPIL), 66-86 (LTIV…FNVA), 161-181 (LIFL…ATLI), 251-271 (IFLF…SISI), 280-300 (IPSF…IASL), and 303-323 (ITLA…GVVS). Residues 9–319 (LLYVFLCIVL…IFTLWNLVQL (311 aa)) form the ABC transmembrane type-1 domain. Residues 352-586 (IRFENVAFGY…NGFYARLKQS (235 aa)) enclose the ABC transporter domain. Residue 385–392 (GPTGAGKS) coordinates ATP.

This sequence belongs to the ABC transporter superfamily.

It localises to the cell membrane. The protein is Putative ABC transporter ATP-binding protein MG015 of Mycoplasma genitalium (strain ATCC 33530 / DSM 19775 / NCTC 10195 / G37) (Mycoplasmoides genitalium).